A 283-amino-acid polypeptide reads, in one-letter code: Probable replication-associated protein repA1 (283 aa).

Belongs to the IncFII RepA family.

This protein is essential for plasmid replication; it is involved in copy control functions. In Buchnera aphidicola subsp. Schizaphis graminum (strain Sg), this protein is Probable replication-associated protein repA1 (repA1).